The primary structure comprises 428 residues: Protein terminus (428 aa).

The segment at 325–346 adopts a C3H1-type zinc-finger fold; that stretch reads CRRCRTQFSRRSKLHIHQKLRC.

In Drosophila melanogaster (Fruit fly), this protein is Protein terminus (term).